Consider the following 780-residue polypeptide: Calpain clp-1 (780 aa).

The span at 269–282 (DVDPFVRPGPDPDR) shows a compositional bias: basic and acidic residues. A disordered region spans residues 269–300 (DVDPFVRPGPDPDRGGGGSGPSPISPRPTTEP). A Calpain catalytic domain is found at 316–611 (LFEDPQFLAN…FEKMEICNLG (296 aa)). Residues cysteine 371, histidine 527, and asparagine 551 contribute to the active site.

Belongs to the peptidase C2 family. Expressed in muscle and neuronal tissues. Expressed in the ventral and dorsal nerve cord, intestinal and hypodermal tissues.

It localises to the cytoplasm. The protein localises to the myofibril. Its subcellular location is the sarcomere. The protein resides in the m line. In terms of biological role, calcium-regulated non-lysosomal thiol-protease which catalyzes limited proteolysis of substrates. Required for assembly and maintenance of integrin attachment complexes which are essential for maintenance of adult muscle. Proteolytic activity is activated in response to increased intracellular Ca(2+) levels during cell degeneration and promotes necrotic cell death. The sequence is that of Calpain clp-1 from Caenorhabditis elegans.